Consider the following 392-residue polypeptide: S-adenosylmethionine synthase (392 aa).

An ATP-binding site is contributed by H20. D22 lines the Mg(2+) pocket. E48 is a binding site for K(+). Positions 61 and 106 each coordinate L-methionine. Positions 106–116 (QSRDIINAIEK) are flexible loop. ATP is bound by residues 171-173 (DSK), D248, 254-255 (RK), A271, and K275. D248 is a binding site for L-methionine. L-methionine is bound at residue K279.

Belongs to the AdoMet synthase family. As to quaternary structure, homotetramer; dimer of dimers. It depends on Mg(2+) as a cofactor. Requires K(+) as cofactor.

The protein localises to the cytoplasm. It carries out the reaction L-methionine + ATP + H2O = S-adenosyl-L-methionine + phosphate + diphosphate. It functions in the pathway amino-acid biosynthesis; S-adenosyl-L-methionine biosynthesis; S-adenosyl-L-methionine from L-methionine: step 1/1. Its function is as follows. Catalyzes the formation of S-adenosylmethionine (AdoMet) from methionine and ATP. The overall synthetic reaction is composed of two sequential steps, AdoMet formation and the subsequent tripolyphosphate hydrolysis which occurs prior to release of AdoMet from the enzyme. The sequence is that of S-adenosylmethionine synthase from Borreliella burgdorferi (strain ATCC 35210 / DSM 4680 / CIP 102532 / B31) (Borrelia burgdorferi).